The sequence spans 450 residues: MYTKDTIVAIATPQGNGGIGIIRISGIDALEIAEKLTKKQLKPRYATFCNVYNDNEIIDHGIVIFFKAPLSYTGEDVVEIQAHGNPFILNLIIKAALNCGARMAKAGEFTERAFLNNKLDLAQAEAVADIINASSEIAAKSAAKSLQGDFSKEINNLLEKLIYLRMYVEASIDFPEEEINFLEDQKIHSSLEEIYKVILAIKNSCKQGVILAEGITLILVGKPNAGKSSLLNALAGKESAIVTSIAGTTRDIVKEHIQINGVPMHIIDTAGLRNSDDIIESEGIKRAIKKIQEADQVLFVTDDYTNSQVKFSDIKEIIPEFYDQIPKDIDITYVHNKIDLLKEVPHNHANHIYISAENNIGIDKLKEHILNKVGYTNQNESIYTARERHVTAINNAFEHIKLAKEQLELGNGELLAEELLIVQEYLNSITGEFSSDDLLGEIFSSFCIGK.

3 residues coordinate (6S)-5-formyl-5,6,7,8-tetrahydrofolate: R23, E79, and K118. The TrmE-type G domain maps to G214–G374. A K(+)-binding site is contributed by N224. GTP-binding positions include N224–S229, T243–T249, and D268–G271. S228 is a binding site for Mg(2+). Residues T243, I245, and T248 each contribute to the K(+) site. T249 serves as a coordination point for Mg(2+). (6S)-5-formyl-5,6,7,8-tetrahydrofolate is bound at residue K450.

It belongs to the TRAFAC class TrmE-Era-EngA-EngB-Septin-like GTPase superfamily. TrmE GTPase family. As to quaternary structure, homodimer. Heterotetramer of two MnmE and two MnmG subunits. Requires K(+) as cofactor.

The protein localises to the cytoplasm. Exhibits a very high intrinsic GTPase hydrolysis rate. Involved in the addition of a carboxymethylaminomethyl (cmnm) group at the wobble position (U34) of certain tRNAs, forming tRNA-cmnm(5)s(2)U34. This is tRNA modification GTPase MnmE from Francisella tularensis subsp. holarctica (strain FTNF002-00 / FTA).